Reading from the N-terminus, the 1592-residue chain is Laminin subunit gamma-1 (1592 aa).

The signal sequence occupies residues 1-19 (MRAPVLAVLAVLLLGTVRA). One can recognise a Laminin N-terminal domain in the interval 29–268 (SPQRCMPEFV…AISDFAVGGR (240 aa)). N-linked (GlcNAc...) asparagine glycans are attached at residues Asn-43 and Asn-117. Disulfide bonds link Cys-269–Cys-278, Cys-271–Cys-288, Cys-290–Cys-299, Cys-302–Cys-322, Cys-325–Cys-334, Cys-327–Cys-350, Cys-353–Cys-362, Cys-365–Cys-378, Cys-381–Cys-393, Cys-383–Cys-399, Cys-401–Cys-410, Cys-413–Cys-425, Cys-428–Cys-439, Cys-430–Cys-446, Cys-448–Cys-457, and Cys-460–Cys-475. 4 consecutive Laminin EGF-like domains span residues 269–324 (CKCN…ECLP), 325–380 (CNCN…PCHA), 381–427 (CQCN…GCRP), and 428–477 (CACN…GCTP). Residues 504–672 (SGVEGWTAQQ…AGPSAPWVEI (169 aa)) form the Laminin IV type A domain. N-linked (GlcNAc...) asparagine glycosylation is found at Asn-559 and Asn-633. 24 cysteine pairs are disulfide-bonded: Cys-707-Cys-716, Cys-709-Cys-723, Cys-725-Cys-734, Cys-737-Cys-753, Cys-756-Cys-764, Cys-758-Cys-775, Cys-778-Cys-787, Cys-790-Cys-808, Cys-811-Cys-825, Cys-813-Cys-832, Cys-835-Cys-844, Cys-847-Cys-864, Cys-867-Cys-881, Cys-869-Cys-888, Cys-890-Cys-899, Cys-902-Cys-915, Cys-918-Cys-930, Cys-920-Cys-937, Cys-939-Cys-948, Cys-951-Cys-963, Cys-966-Cys-978, Cys-968-Cys-984, Cys-986-Cys-995, and Cys-998-Cys-1011. Laminin EGF-like domains are found at residues 707-755 (CTCN…DCQP), 756-810 (CPCP…PCRI), 811-866 (CECS…KCRA), 867-917 (CSCN…GCER), 918-965 (CDCH…GCKP), and 966-1013 (CDCD…GCQE). Residues Asn-1005, Asn-1041, Asn-1048, Asn-1090, Asn-1144, Asn-1158, Asn-1188, Asn-1206, Asn-1253, Asn-1363, and Asn-1386 are each glycosylated (N-linked (GlcNAc...) asparagine). The domain II and I stretch occupies residues 1013–1592 (ECPACYRLVK…CYNTPIIEKP (580 aa)). Residues 1018 to 1477 (YRLVKDKVNE…DEKMAEMASN (460 aa)) are a coiled coil. Positions 1456-1472 (NQLKKKQAEAESDEKMA) are enriched in basic and acidic residues. A disordered region spans residues 1456–1489 (NQLKKKQAEAESDEKMAEMASNATKDAESNANNS). Residues 1476 to 1489 (SNATKDAESNANNS) show a composition bias toward polar residues. N-linked (GlcNAc...) asparagine glycosylation is found at Asn-1477 and Asn-1487. A coiled-coil region spans residues 1515-1579 (VGQLTVLEKT…ANLEDIKNTL (65 aa)).

In terms of assembly, laminin is a complex glycoprotein, consisting of three different polypeptide chains (alpha, beta, gamma), which are bound to each other by disulfide bonds into a cross-shaped molecule comprising one long and three short arms with globules at each end.

The protein resides in the secreted. It is found in the extracellular space. The protein localises to the extracellular matrix. It localises to the basement membrane. Functionally, binding to cells via a high affinity receptor, laminin is thought to mediate the attachment, migration and organization of cells into tissues during embryonic development by interacting with other extracellular matrix components. The chain is Laminin subunit gamma-1 (lamc1) from Xenopus tropicalis (Western clawed frog).